The sequence spans 510 residues: NAD(P)H-quinone oxidoreductase subunit 2 A, chloroplastic (510 aa).

The next 13 helical transmembrane spans lie at leucine 24 to leucine 44, methionine 57 to phenylalanine 77, isoleucine 99 to isoleucine 119, methionine 124 to cysteine 144, leucine 149 to tyrosine 169, tyrosine 183 to glycine 203, proline 227 to alanine 247, tryptophan 295 to isoleucine 315, methionine 323 to aspartate 343, tyrosine 354 to leucine 374, alanine 395 to phenylalanine 415, leucine 418 to leucine 438, and leucine 482 to isoleucine 502.

It belongs to the complex I subunit 2 family. As to quaternary structure, NDH is composed of at least 16 different subunits, 5 of which are encoded in the nucleus.

Its subcellular location is the plastid. The protein resides in the chloroplast thylakoid membrane. The enzyme catalyses a plastoquinone + NADH + (n+1) H(+)(in) = a plastoquinol + NAD(+) + n H(+)(out). The catalysed reaction is a plastoquinone + NADPH + (n+1) H(+)(in) = a plastoquinol + NADP(+) + n H(+)(out). NDH shuttles electrons from NAD(P)H:plastoquinone, via FMN and iron-sulfur (Fe-S) centers, to quinones in the photosynthetic chain and possibly in a chloroplast respiratory chain. The immediate electron acceptor for the enzyme in this species is believed to be plastoquinone. Couples the redox reaction to proton translocation, and thus conserves the redox energy in a proton gradient. This chain is NAD(P)H-quinone oxidoreductase subunit 2 A, chloroplastic, found in Populus trichocarpa (Western balsam poplar).